The following is a 500-amino-acid chain: 2-isopropylmalate synthase (500 aa).

In terms of domain architecture, Pyruvate carboxyltransferase spans 5-266 (LFIFDTTLRD…ITNITTNKIY (262 aa)). The Mn(2+) site is built by D14, H202, H204, and N238. A regulatory domain region spans residues 389–500 (KLEYLQVTSG…VDAINKFIVD (112 aa)).

The protein belongs to the alpha-IPM synthase/homocitrate synthase family. LeuA type 1 subfamily. In terms of assembly, homodimer. The cofactor is Mn(2+).

It is found in the cytoplasm. It carries out the reaction 3-methyl-2-oxobutanoate + acetyl-CoA + H2O = (2S)-2-isopropylmalate + CoA + H(+). It participates in amino-acid biosynthesis; L-leucine biosynthesis; L-leucine from 3-methyl-2-oxobutanoate: step 1/4. Catalyzes the condensation of the acetyl group of acetyl-CoA with 3-methyl-2-oxobutanoate (2-ketoisovalerate) to form 3-carboxy-3-hydroxy-4-methylpentanoate (2-isopropylmalate). The protein is 2-isopropylmalate synthase of Parabacteroides distasonis (strain ATCC 8503 / DSM 20701 / CIP 104284 / JCM 5825 / NCTC 11152).